A 255-amino-acid chain; its full sequence is MVQKRKDLRRSDAGSAVRAKLHKASTGKAFPVGKRAPLQIRSYAWETPATATTPSGPISITDGTIFMCNTIDPGTGDDQRSRHTTMLYKMSLNVVLWPGATTAQIVGPFRVNFWLVYDAAPTGVVPKLTDIFDVAYPKWGNTWQVSRSNVHRFIVKRKWKVDYQSSGVPVGKRQSSGVEYAPVNNVVECNKFFEKLRVKTEWANTSTGAIGDVKKGALYLCANTRQMPAGDSVTTSCTTMMQGSTRLYFKVLGNQ.

A Bipartite nuclear localization signal motif is present at residues 1-25; the sequence is MVQKRKDLRRSDAGSAVRAKLHKAS.

It belongs to the geminiviridae capsid protein family. Homomultimer. Interacts with the movement protein. Binds to single-stranded and double-stranded viral DNA.

It localises to the virion. The protein resides in the host nucleus. Its function is as follows. Encapsidates the viral genome into characteristic twinned ('geminate') particles. Binds the genomic viral ssDNA and shuttles it into and out of the cell nucleus. Plays a role in protection of the genome from degradation, virus acquisition and transmission by insect vectors, infectivity, and systemic movement. The CP of monopartite geminiviruses is absolutely essential for virus movement. The protein is Capsid protein of Miscanthus streak virus (isolate 91) (MiSV).